The sequence spans 290 residues: ATP synthase subunit a (290 aa).

6 helical membrane-spanning segments follow: residues 44–64 (AFHVDTLGWSVALGVIFILLF), 104–124 (VIAPLALTIFVWVFLMNAIDL), 161–181 (LSVFALIIFYSIKVKGIGGFI), 194–214 (ILVQALLIPVNFLLEFVTLVA), 233–253 (VFILIAVMFGSGLLWLSGMGV), and 260–280 (AVFHILIITLQAFIFMMLTIV).

It belongs to the ATPase A chain family. F-type ATPases have 2 components, CF(1) - the catalytic core - and CF(0) - the membrane proton channel. CF(1) has five subunits: alpha(3), beta(3), gamma(1), delta(1), epsilon(1). CF(0) has three main subunits: a(1), b(2) and c(9-12). The alpha and beta chains form an alternating ring which encloses part of the gamma chain. CF(1) is attached to CF(0) by a central stalk formed by the gamma and epsilon chains, while a peripheral stalk is formed by the delta and b chains.

The protein resides in the cell inner membrane. Key component of the proton channel; it plays a direct role in the translocation of protons across the membrane. The protein is ATP synthase subunit a of Pseudomonas fluorescens (strain ATCC BAA-477 / NRRL B-23932 / Pf-5).